The chain runs to 221 residues: GTP-binding nuclear protein Ran-1 (221 aa).

In terms of domain architecture, Small GTPase Ran-type spans 10–174 (DYPSFKLVIV…LYLARKLAGD (165 aa)). 21–28 (DGGTGKTT) contacts GTP. Residues 40 to 48 (KKYEPTIGV) form a switch-I region. Residues glycine 71, 125-128 (NKVD), and 153-155 (SAK) each bind GTP. Residues 71–87 (GQEKFGGLRDGYYIHGQ) form a switch-II region.

The protein belongs to the small GTPase superfamily. Ran family. As to quaternary structure, found in a nuclear export complex with RanGTP, exportin and pre-miRNA.

Its subcellular location is the nucleus. Its function is as follows. GTP-binding protein involved in nucleocytoplasmic transport. Required for the import of protein into the nucleus and also for RNA export. Involved in chromatin condensation and control of cell cycle. The chain is GTP-binding nuclear protein Ran-1 (RAN1) from Oryza sativa subsp. indica (Rice).